We begin with the raw amino-acid sequence, 336 residues long: Biotin synthase (336 aa).

One can recognise a Radical SAM core domain in the interval 54–281 (QAIQLSTLLS…KSYVRLSAGR (228 aa)). 3 residues coordinate [4Fe-4S] cluster: Cys69, Cys73, and Cys76. The [2Fe-2S] cluster site is built by Cys113, Cys144, Cys204, and Arg276.

This sequence belongs to the radical SAM superfamily. Biotin synthase family. As to quaternary structure, homodimer. It depends on [4Fe-4S] cluster as a cofactor. [2Fe-2S] cluster serves as cofactor.

The enzyme catalyses (4R,5S)-dethiobiotin + (sulfur carrier)-SH + 2 reduced [2Fe-2S]-[ferredoxin] + 2 S-adenosyl-L-methionine = (sulfur carrier)-H + biotin + 2 5'-deoxyadenosine + 2 L-methionine + 2 oxidized [2Fe-2S]-[ferredoxin]. It functions in the pathway cofactor biosynthesis; biotin biosynthesis; biotin from 7,8-diaminononanoate: step 2/2. Catalyzes the conversion of dethiobiotin (DTB) to biotin by the insertion of a sulfur atom into dethiobiotin via a radical-based mechanism. This is Biotin synthase from Actinobacillus pleuropneumoniae serotype 7 (strain AP76).